A 366-amino-acid chain; its full sequence is tRNA 2-selenouridine synthase (366 aa).

A Rhodanese domain is found at 12–136 (FLSGTPMMDV…MRGFLIDVIE (125 aa)). C95 serves as the catalytic S-selanylcysteine intermediate.

Belongs to the SelU family. Monomer.

It catalyses the reaction 5-methylaminomethyl-2-thiouridine(34) in tRNA + selenophosphate + (2E)-geranyl diphosphate + H2O + H(+) = 5-methylaminomethyl-2-selenouridine(34) in tRNA + (2E)-thiogeraniol + phosphate + diphosphate. The enzyme catalyses 5-methylaminomethyl-2-thiouridine(34) in tRNA + (2E)-geranyl diphosphate = 5-methylaminomethyl-S-(2E)-geranyl-thiouridine(34) in tRNA + diphosphate. The catalysed reaction is 5-methylaminomethyl-S-(2E)-geranyl-thiouridine(34) in tRNA + selenophosphate + H(+) = 5-methylaminomethyl-2-(Se-phospho)selenouridine(34) in tRNA + (2E)-thiogeraniol. It carries out the reaction 5-methylaminomethyl-2-(Se-phospho)selenouridine(34) in tRNA + H2O = 5-methylaminomethyl-2-selenouridine(34) in tRNA + phosphate. In terms of biological role, involved in the post-transcriptional modification of the uridine at the wobble position (U34) of tRNA(Lys), tRNA(Glu) and tRNA(Gln). Catalyzes the conversion of 2-thiouridine (S2U-RNA) to 2-selenouridine (Se2U-RNA). Acts in a two-step process involving geranylation of 2-thiouridine (S2U) to S-geranyl-2-thiouridine (geS2U) and subsequent selenation of the latter derivative to 2-selenouridine (Se2U) in the tRNA chain. The chain is tRNA 2-selenouridine synthase from Cupriavidus pinatubonensis (strain JMP 134 / LMG 1197) (Cupriavidus necator (strain JMP 134)).